We begin with the raw amino-acid sequence, 383 residues long: UDP-N-acetylglucosamine 2-epimerase (383 aa).

This sequence belongs to the UDP-N-acetylglucosamine 2-epimerase family.

The enzyme catalyses UDP-N-acetyl-alpha-D-glucosamine = UDP-N-acetyl-alpha-D-mannosamine. Its pathway is capsule biogenesis; capsule polysaccharide biosynthesis. Functionally, non-hydrolyzing C2-epimerase involved in the biosynthesis of capsular polysaccharides. Catalyzes the C2 epimerization of UDP-N-acetylglucosamine (UDP-GlcNAc) to form UDP-N-acetylmannosamine (UDP-ManNAc). The sequence is that of UDP-N-acetylglucosamine 2-epimerase from Campylobacter jejuni.